Consider the following 214-residue polypeptide: Nigrelysin (214 aa).

The N-terminal stretch at 1–21 is a signal peptide; that stretch reads MKNRLVIIVFMVVTMLCASLA. Residues 22–35 constitute a propeptide that is removed on maturation; the sequence is LPLEEKEDEKDEKR. Residues 38 to 47 are plays an important role in the hemolytic activity; it reads EVAGAVMEGA. The tract at residues 46-65 is N-terminal region; that stretch reads GANLGMSVLQTILQAIGDVS. Residues serine 89, valine 122, serine 140, proline 142, tyrosine 168, tyrosine 172, and tyrosine 173 each contribute to the phosphocholine site. The tract at residues 140-155 is trp-rich region, which is important for the binding to lipid membrane; that stretch reads SVPYDYNWYSNWWNVK. The short motif at 179 to 181 is the Cell attachment site, crucial for protein stability element; that stretch reads KGD.

Belongs to the actinoporin family. Sea anemone subfamily. Octamer or nonamer in membranes. Monomer in the soluble state.

The protein localises to the secreted. It is found in the nematocyst. The protein resides in the target cell membrane. Functionally, pore-forming protein that forms cation-selective hydrophilic pores in cell membranes and causes cytolysis. Pore formation is a multi-step process that involves specific recognition of membrane sphingomyelin (but neither cholesterol nor phosphatidylcholine) using aromatic rich region and adjacent phosphocholine (POC) binding site, firm binding to the membrane (mainly driven by hydrophobic interactions) accompanied by the transfer of the N-terminal region to the lipid-water interface and finally pore formation after oligomerization of monomers. This protein shows potent hemolytic activity (EC(50)=0.09 nM), as well as potent cytotoxic activity on nucleated cells (L1210 cells). The cytotoxic process starts with cellular swelling that is time and dose dependent and occurs up to a critical volume, probably due to influx of water via pores opened by this actinoporin. The second phase consists of the final loss of membrane integrity that leads to cytolysis. This is Nigrelysin from Anthopleura nigrescens (Sea anemone).